The primary structure comprises 298 residues: Protease HtpX homolog (298 aa).

Helical transmembrane passes span 14 to 34 and 39 to 59; these read VVLLVVFFALLALIGASAGYL and YAMGLVLALVIGVIYATSMIF. His-143 contacts Zn(2+). Residue Glu-144 is part of the active site. His-147 lines the Zn(2+) pocket. Helical transmembrane passes span 158–178 and 197–217; these read IAVALASAVTVISSIGGRMLW and IITLLLSLLSLLLAPLVASLI. Residue Glu-226 coordinates Zn(2+).

It belongs to the peptidase M48B family. The cofactor is Zn(2+).

Its subcellular location is the cell membrane. The polypeptide is Protease HtpX homolog (Streptococcus pyogenes serotype M3 (strain SSI-1)).